The chain runs to 199 residues: Chaperone protein TorD (199 aa).

This sequence belongs to the TorD/DmsD family. TorD subfamily.

It localises to the cytoplasm. In terms of biological role, involved in the biogenesis of TorA. Acts on TorA before the insertion of the molybdenum cofactor and, as a result, probably favors a conformation of the apoenzyme that is competent for acquiring the cofactor. The polypeptide is Chaperone protein TorD (Actinobacillus pleuropneumoniae serotype 3 (strain JL03)).